Reading from the N-terminus, the 131-residue chain is Beta/delta-urticatoxin-Dm2a (131 aa).

Positions 1–24 (MKSSATVVLLVAAVTAAMVMSSSA) are cleaved as a signal peptide. Positions 25 to 69 (SGDAVMIDEHNNIMTSVEGKRGIGSSVVANGGNRKMANVLLSGWE) are excised as a propeptide. Intrachain disulfides connect C72–C88, C79–C93, C87–C101, C103–C117, C110–C122, and C116–C130.

It belongs to the urticatoxin-2 family. As to expression, expressed in trichomes, that are stiff epidermal hairs located on the surface of petioles and leaves.

Its subcellular location is the secreted. In terms of biological role, plant defense neurotoxin that causes pain and systemic symptoms in mammals via modulation of voltage-gated sodium channels (Nav). Potent modulator of human Nav1.5/SCN5A (EC(50)=55 nM), Nav1.6/SCN8A (EC(50)=0.86 nM), and Nav1.7/SCN9A (EC(50)=208 nM), where it shifts the activation threshold to more negative potentials and delays fast inactivation. Also shifts the voltage-dependence of steady-state fast inactivation of Nav1.6/SCN8A, but not that of Nav1.5/SCN5A or Nav1.7/SCN9A. On Nav1.7/SCN9A, principally acts by binding to extracellular loops of domain IV (Nav site 3). In vivo, intraplantar injection into mice causes numerous dose-dependent, immediate, and long-lasting spontaneous pain behaviors, while no swelling is observed in the injected paw. At the highest doses tested, systemic symptoms including hypokinesia and hypersalivation are observed. The polypeptide is Beta/delta-urticatoxin-Dm2a (Dendrocnide moroides (Gympie stinging tree)).